Reading from the N-terminus, the 101-residue chain is Urease subunit beta (101 aa).

The protein belongs to the urease beta subunit family. As to quaternary structure, heterotrimer of UreA (gamma), UreB (beta) and UreC (alpha) subunits. Three heterotrimers associate to form the active enzyme.

It is found in the cytoplasm. It carries out the reaction urea + 2 H2O + H(+) = hydrogencarbonate + 2 NH4(+). Its pathway is nitrogen metabolism; urea degradation; CO(2) and NH(3) from urea (urease route): step 1/1. The polypeptide is Urease subunit beta (Pseudomonas syringae pv. syringae (strain B728a)).